Here is a 212-residue protein sequence, read N- to C-terminus: Bilin biosynthesis protein PecF (212 aa).

This sequence belongs to the CpcE/RpcE/PecE family.

Functionally, an enzyme involved in the biosynthesis of bilin. This is Bilin biosynthesis protein PecF (pecF) from Mastigocladus laminosus (Fischerella sp.).